We begin with the raw amino-acid sequence, 443 residues long: D-serine dehydratase (443 aa).

Position 118 is an N6-(pyridoxal phosphate)lysine (Lys118).

Belongs to the serine/threonine dehydratase family. DsdA subfamily. In terms of assembly, monomer. Pyridoxal 5'-phosphate serves as cofactor.

It carries out the reaction D-serine = pyruvate + NH4(+). This is D-serine dehydratase from Photorhabdus laumondii subsp. laumondii (strain DSM 15139 / CIP 105565 / TT01) (Photorhabdus luminescens subsp. laumondii).